We begin with the raw amino-acid sequence, 415 residues long: Phosphoribosylamine--glycine ligase (415 aa).

The 204-residue stretch at 108–311 folds into the ATP-grasp domain; it reads KKIMEKYNIP…LMQHIIDLDE (204 aa). 134-191 contributes to the ATP binding site; the sequence is IENCELPVVVKKDGLAAGKGVIIADTIEAARSAIEIMYGDEEEGTVVFETFLEGEEFS. Mg(2+) contacts are provided by Glu281 and Asn283.

This sequence belongs to the GARS family. Mg(2+) serves as cofactor. It depends on Mn(2+) as a cofactor.

The enzyme catalyses 5-phospho-beta-D-ribosylamine + glycine + ATP = N(1)-(5-phospho-beta-D-ribosyl)glycinamide + ADP + phosphate + H(+). Its pathway is purine metabolism; IMP biosynthesis via de novo pathway; N(1)-(5-phospho-D-ribosyl)glycinamide from 5-phospho-alpha-D-ribose 1-diphosphate: step 2/2. This is Phosphoribosylamine--glycine ligase from Staphylococcus aureus (strain COL).